The primary structure comprises 73 residues: Small ribosomal subunit protein bS18 (73 aa).

This sequence belongs to the bacterial ribosomal protein bS18 family. In terms of assembly, part of the 30S ribosomal subunit. Forms a tight heterodimer with protein bS6.

Its function is as follows. Binds as a heterodimer with protein bS6 to the central domain of the 16S rRNA, where it helps stabilize the platform of the 30S subunit. In Prochlorococcus marinus subsp. pastoris (strain CCMP1986 / NIES-2087 / MED4), this protein is Small ribosomal subunit protein bS18.